We begin with the raw amino-acid sequence, 254 residues long: tRNA (guanine-N(7)-)-methyltransferase (254 aa).

Residues 1 to 34 (MNTNTPAHPPEGAPLSEATQAALASAEHAPDSPG) form a disordered region. 4 residues coordinate S-adenosyl-L-methionine: E87, E112, D139, and D162. D162 is an active-site residue. Substrate-binding positions include K166, D198, and 233–236 (TKFE).

The protein belongs to the class I-like SAM-binding methyltransferase superfamily. TrmB family.

It catalyses the reaction guanosine(46) in tRNA + S-adenosyl-L-methionine = N(7)-methylguanosine(46) in tRNA + S-adenosyl-L-homocysteine. Its pathway is tRNA modification; N(7)-methylguanine-tRNA biosynthesis. Catalyzes the formation of N(7)-methylguanine at position 46 (m7G46) in tRNA. This chain is tRNA (guanine-N(7)-)-methyltransferase, found in Bordetella pertussis (strain Tohama I / ATCC BAA-589 / NCTC 13251).